Consider the following 456-residue polypeptide: Gamma-glutamyl phosphate reductase (456 aa).

Ser-2 carries the N-acetylserine modification.

This sequence belongs to the gamma-glutamyl phosphate reductase family.

It catalyses the reaction L-glutamate 5-semialdehyde + phosphate + NADP(+) = L-glutamyl 5-phosphate + NADPH + H(+). It functions in the pathway amino-acid biosynthesis; L-proline biosynthesis; L-glutamate 5-semialdehyde from L-glutamate: step 2/2. Catalyzes the NADPH dependent reduction of L-gamma-glutamyl 5-phosphate into L-glutamate 5-semialdehyde and phosphate. The product spontaneously undergoes cyclization to form 1-pyrroline-5-carboxylate. The protein is Gamma-glutamyl phosphate reductase (PRO2) of Saccharomyces cerevisiae (strain ATCC 204508 / S288c) (Baker's yeast).